Consider the following 340-residue polypeptide: Aliphatic sulfonates import ATP-binding protein SsuB 1 (340 aa).

The tract at residues 44–72 (THHHARVAAQGHARGDAQPPAGALARDDG) is disordered. The region spanning 80–299 (VQLRGVGKRY…ARASAGFAAL (220 aa)) is the ABC transporter domain. ATP is bound at residue 112–119 (GRSGCGKS).

This sequence belongs to the ABC transporter superfamily. Aliphatic sulfonates importer (TC 3.A.1.17.2) family. The complex is composed of two ATP-binding proteins (SsuB), two transmembrane proteins (SsuC) and a solute-binding protein (SsuA).

The protein resides in the cell inner membrane. The catalysed reaction is ATP + H2O + aliphatic sulfonate-[sulfonate-binding protein]Side 1 = ADP + phosphate + aliphatic sulfonateSide 2 + [sulfonate-binding protein]Side 1.. Functionally, part of the ABC transporter complex SsuABC involved in aliphatic sulfonates import. Responsible for energy coupling to the transport system. In Paraburkholderia xenovorans (strain LB400), this protein is Aliphatic sulfonates import ATP-binding protein SsuB 1.